We begin with the raw amino-acid sequence, 647 residues long: DNA mismatch repair protein MutL (647 aa).

It belongs to the DNA mismatch repair MutL/HexB family.

In terms of biological role, this protein is involved in the repair of mismatches in DNA. It is required for dam-dependent methyl-directed DNA mismatch repair. May act as a 'molecular matchmaker', a protein that promotes the formation of a stable complex between two or more DNA-binding proteins in an ATP-dependent manner without itself being part of a final effector complex. This Bacillus thuringiensis (strain Al Hakam) protein is DNA mismatch repair protein MutL.